Reading from the N-terminus, the 195-residue chain is Ras-related protein Rab-31 (195 aa).

Residues glycine 16, glycine 18, lysine 19, serine 20, serine 21, aspartate 32, and histidine 33 each coordinate GTP. Serine 20 contributes to the Mg(2+) binding site. Short sequence motifs (switch) lie at residues 30 to 42 (HFDH…IGAS) and 63 to 79 (AGQE…YRGS). Residue serine 36 is modified to Phosphoserine. GTP contacts are provided by threonine 38, glycine 64, asparagine 119, aspartate 122, alanine 150, and lysine 151. Residue threonine 38 participates in Mg(2+) binding. Residues cysteine 194 and cysteine 195 are each lipidated (S-geranylgeranyl cysteine).

This sequence belongs to the small GTPase superfamily. Rab family. As to quaternary structure, interacts with OCRL. Interacts with NGFR. Interacts (in GDP-bound form) with RIN3 and GAPVD1, which function as guanine exchange factors (GEF). Interacts (in GTP-bound form) with EEA1. Interacts with EGFR. Interacts (in GTP-bound form) with APPL2; interaction contributes to or enhances recruitment of APPL2 to the phagosomes; interaction enhances Fc-gamma receptor-mediated phagocytosis through PI3K/Akt signaling in macrophages. Mg(2+) is required as a cofactor. As to expression, highest expression in placenta and brain with lower levels in heart and lung. Not detected in liver, skeletal muscle, kidney or pancreas.

The protein resides in the golgi apparatus. Its subcellular location is the trans-Golgi network. It localises to the trans-Golgi network membrane. It is found in the early endosome. The protein localises to the cytoplasmic vesicle. The protein resides in the phagosome. Its subcellular location is the phagosome membrane. The enzyme catalyses GTP + H2O = GDP + phosphate + H(+). With respect to regulation, regulated by guanine nucleotide exchange factors (GEFs) including RIN3 and GAPVD1 which promote the exchange of bound GDP for free GTP. Regulated by GTPase activating proteins (GAPs) which increase the GTP hydrolysis activity. Inhibited by GDP dissociation inhibitors (GDIs) which prevent Rab-GDP dissociation. Its function is as follows. The small GTPases Rab are key regulators of intracellular membrane trafficking, from the formation of transport vesicles to their fusion with membranes. Rabs cycle between an inactive GDP-bound form and an active GTP-bound form that is able to recruit to membranes different set of downstream effectors directly responsible for vesicle formation, movement, tethering and fusion. Required for the integrity and for normal function of the Golgi apparatus and the trans-Golgi network. Plays a role in insulin-stimulated translocation of GLUT4 to the cell membrane. Plays a role in M6PR transport from the trans-Golgi network to endosomes. Plays a role in the internalization of EGFR from the cell membrane into endosomes. Plays a role in the maturation of phagosomes that engulf pathogens, such as S.aureus and M.tuberculosis. This is Ras-related protein Rab-31 from Homo sapiens (Human).